We begin with the raw amino-acid sequence, 272 residues long: MADS-box transcription factor 58 (272 aa).

Residues 1–41 (MHIYKEQEAEPSTGLMMPEPAPVASPGSGGSGGSGSVGAEK) are disordered. The segment covering 27 to 36 (GSGGSGGSGS) has biased composition (gly residues). The region spanning 43–103 (GSRGKIEIKR…GRLYEYSNNS (61 aa)) is the MADS-box domain. One can recognise a K-box domain in the interval 129-219 (AQHYQQEAAK…KSKVAESERG (91 aa)).

In terms of tissue distribution, expressed in the lodicule, stamen carpel and ovule primordia.

It is found in the nucleus. Probable transcription factor involved in the development of floral organs. Acts as a C-class protein in association with MADS3. Involved in the control of lodicule number (whorl 2), stamen specification (whorl 3), floral meristem determinacy and regulation of the carpel morphogenesis (whorl 4). Plays a more predominant role in floral meristem determinacy than MADS3. This is MADS-box transcription factor 58 (MADS58) from Oryza sativa subsp. japonica (Rice).